A 635-amino-acid polypeptide reads, in one-letter code: Sodium-dependent multivitamin transporter (635 aa).

The next 3 helical transmembrane spans lie at 24-44 (FSIMDYVVFVLLLVLSLAIGL), 68-88 (CLPVALSLLATFQSAVAILGV), and 101-121 (FLGCCYFLGLLIPAHIFIPVF). N-linked (GlcNAc...) asparagine glycosylation is present at Asn-138. 9 helical membrane passes run 143–163 (VCGTVTFIFQMVIYMGVVLYA), 176–196 (LWLSVLALGIVCTVYTALGGL), 199–219 (VIWTDVFQTLVMFLGQLAVII), 256–276 (FWTLAFGGVFMMLSLYGVNQA), 297–317 (VFPFQQVSLCVGCLIGLVMFA), 336–356 (FVLYFVMDLLKGLPGLPGLFI), 396–416 (IMLSRGLAFGYGLLCLGMAYI), 428–448 (ISIFGMVGGPLLGLFCLGMFF), and 456–476 (AVVGLLAGLVMAFWIGIGSIV). Asn-489 and Asn-498 each carry an N-linked (GlcNAc...) asparagine glycan. A helical membrane pass occupies residues 528-548 (LWYSAHNSTTVIVVGLIVSLL).

The protein belongs to the sodium:solute symporter (SSF) (TC 2.A.21) family. In terms of assembly, interacts with PDZD11. In terms of processing, may be glycosylated. As to expression, expressed in microvessels of the brain (at protein level). Expressed in heart, brain, placenta, lung, liver, skeletal muscle, kidney, and pancreas.

It is found in the cell membrane. Its subcellular location is the apical cell membrane. It carries out the reaction biotin(out) + 2 Na(+)(out) = biotin(in) + 2 Na(+)(in). It catalyses the reaction (R)-pantothenate(out) + 2 Na(+)(out) = (R)-pantothenate(in) + 2 Na(+)(in). The enzyme catalyses (R)-lipoate(out) + 2 Na(+)(out) = (R)-lipoate(in) + 2 Na(+)(in). The catalysed reaction is iodide(out) + 2 Na(+)(out) = iodide(in) + 2 Na(+)(in). Sodium-dependent multivitamin transporter that mediates the electrogenic transport of pantothenate, biotin, lipoate and iodide. Functions as a Na(+)-coupled substrate symporter where the stoichiometry of Na(+):substrate is 2:1, creating an electrochemical Na(+) gradient used as driving force for substrate uptake. Required for biotin and pantothenate uptake in the intestine across the brush border membrane. Plays a role in the maintenance of intestinal mucosa integrity, by providing the gut mucosa with biotin. Contributes to the luminal uptake of biotin and pantothenate into the brain across the blood-brain barrier. The protein is Sodium-dependent multivitamin transporter of Homo sapiens (Human).